Consider the following 614-residue polypeptide: Bifunctional enzyme CysN/CysC (614 aa).

The segment at 1-441 (MTTLLRLATA…SLVTAQDRPP (441 aa)) is sulfate adenylyltransferase. One can recognise a tr-type G domain in the interval 2-217 (TTLLRLATAG…DVYIAGDRNM (216 aa)). Positions 11-18 (GSVDDGKS) are G1. Residue 11 to 18 (GSVDDGKS) participates in GTP binding. The G2 stretch occupies residues 67-71 (GITID). Positions 88-91 (DTPG) are G3. Residues 88–92 (DTPGH) and 143–146 (NKMD) contribute to the GTP site. The segment at 143–146 (NKMD) is G4. The segment at 180 to 182 (SAL) is G5. An adenylyl-sulfate kinase region spans residues 442-614 (RGKTVWFTGL…EVIDLLESSS (173 aa)). 450–457 (GLSGSGKS) contacts ATP. Catalysis depends on S524, which acts as the Phosphoserine intermediate. The segment at 578–597 (GIDSPYQRPKNPDLRLTPDR) is disordered. Positions 587 to 597 (KNPDLRLTPDR) are enriched in basic and acidic residues.

In the C-terminal section; belongs to the APS kinase family. The protein in the N-terminal section; belongs to the TRAFAC class translation factor GTPase superfamily. Classic translation factor GTPase family. CysN/NodQ subfamily. In terms of assembly, heterodimer composed of CysD, the smaller subunit, and CysNC.

It carries out the reaction sulfate + ATP + H(+) = adenosine 5'-phosphosulfate + diphosphate. The catalysed reaction is adenosine 5'-phosphosulfate + ATP = 3'-phosphoadenylyl sulfate + ADP + H(+). The protein operates within sulfur metabolism; hydrogen sulfide biosynthesis; sulfite from sulfate: step 1/3. It functions in the pathway sulfur metabolism; hydrogen sulfide biosynthesis; sulfite from sulfate: step 2/3. In terms of biological role, with CysD forms the ATP sulfurylase (ATPS) that catalyzes the adenylation of sulfate producing adenosine 5'-phosphosulfate (APS) and diphosphate, the first enzymatic step in sulfur assimilation pathway. APS synthesis involves the formation of a high-energy phosphoric-sulfuric acid anhydride bond driven by GTP hydrolysis by CysN coupled to ATP hydrolysis by CysD. APS kinase catalyzes the synthesis of activated sulfate. In Mycobacterium tuberculosis (strain CDC 1551 / Oshkosh), this protein is Bifunctional enzyme CysN/CysC (cysNC).